Reading from the N-terminus, the 515-residue chain is 2,3-bisphosphoglycerate-independent phosphoglycerate mutase (515 aa).

Positions 14 and 64 each coordinate Mn(2+). Ser64 acts as the Phosphoserine intermediate in catalysis. Residues His125, Arg155 to Asp156, Arg187, Arg193, Arg263 to Arg266, and Lys337 contribute to the substrate site. Asp404, His408, Asp445, His446, and His464 together coordinate Mn(2+).

The protein belongs to the BPG-independent phosphoglycerate mutase family. As to quaternary structure, monomer. The cofactor is Mn(2+).

The enzyme catalyses (2R)-2-phosphoglycerate = (2R)-3-phosphoglycerate. Its pathway is carbohydrate degradation; glycolysis; pyruvate from D-glyceraldehyde 3-phosphate: step 3/5. In terms of biological role, catalyzes the interconversion of 2-phosphoglycerate and 3-phosphoglycerate. The sequence is that of 2,3-bisphosphoglycerate-independent phosphoglycerate mutase from Yersinia pseudotuberculosis serotype O:1b (strain IP 31758).